The chain runs to 193 residues: 7-methyl-GTP pyrophosphatase (193 aa).

The Proton acceptor role is filled by aspartate 70.

The protein belongs to the Maf family. YceF subfamily. It depends on a divalent metal cation as a cofactor.

It is found in the cytoplasm. The catalysed reaction is N(7)-methyl-GTP + H2O = N(7)-methyl-GMP + diphosphate + H(+). Its function is as follows. Nucleoside triphosphate pyrophosphatase that hydrolyzes 7-methyl-GTP (m(7)GTP). May have a dual role in cell division arrest and in preventing the incorporation of modified nucleotides into cellular nucleic acids. In Aliivibrio fischeri (strain ATCC 700601 / ES114) (Vibrio fischeri), this protein is 7-methyl-GTP pyrophosphatase.